Here is a 266-residue protein sequence, read N- to C-terminus: Undecaprenyl-diphosphatase (266 aa).

A run of 8 helical transmembrane segments spans residues 1–21 (MDTF…FLPI), 39–59 (QGLS…VMYF), 87–107 (WWII…KDFI), 111–131 (FRSI…LWWA), 144–164 (VGWK…IPGT), 183–203 (AAAR…AILV), 218–238 (ALGL…HYFL), and 246–266 (MTPF…IIFL).

This sequence belongs to the UppP family.

Its subcellular location is the cell inner membrane. It carries out the reaction di-trans,octa-cis-undecaprenyl diphosphate + H2O = di-trans,octa-cis-undecaprenyl phosphate + phosphate + H(+). Functionally, catalyzes the dephosphorylation of undecaprenyl diphosphate (UPP). Confers resistance to bacitracin. The sequence is that of Undecaprenyl-diphosphatase from Shewanella pealeana (strain ATCC 700345 / ANG-SQ1).